A 93-amino-acid polypeptide reads, in one-letter code: Parbolysin P1 (93 aa).

3 cysteine pairs are disulfide-bonded: cysteine 16/cysteine 37, cysteine 22/cysteine 33, and cysteine 47/cysteine 60.

The protein belongs to the worm cytolysin family. In terms of tissue distribution, localized within the skin and proboscis and are most readily isolated from body mucus secretions.

The protein localises to the secreted. Functionally, cytolysin that shows hemolytic activity (on bovine erythrocytes, HC(50)=5.75 mg/ml). This hemolytic activity is completely inhibited by small unilamelar vesicles composed of PC/PG, PC/PI and PC/PS in 1:1 molar ratios (with at least 100 mg/ml concentration). The recombinant protein does not show hemolytic activity, suggesting that it is not properly folded or that it requires a free N-terminal end for its activity. In Parborlasia corrugatus (Antarctic nemertean worm), this protein is Parbolysin P1.